Consider the following 366-residue polypeptide: BIIDXI-like protein At5g11420 (366 aa).

Residues 1-22 form the signal peptide; it reads MKGGSLSFLFVLLIATITSVIC. N-linked (GlcNAc...) asparagine glycosylation is found at N98, N122, and N209.

As to quaternary structure, interacts with PME3.

The protein resides in the secreted. It is found in the cell wall. Together with BIIDXI, acts as a positive regulator of PME3 activity during several developmental processes, including seed germination and endosperm (testa) rupture at the micropyle, probably by modulating the pectin status in cell walls. In Arabidopsis thaliana (Mouse-ear cress), this protein is BIIDXI-like protein At5g11420.